An 81-amino-acid chain; its full sequence is uncharacterized protein (81 aa).

The tract at residues 46 to 81 (ASSPVVKRKSLVKRKSPVKRSPLKKRSQMRTSPCEA) is disordered. The segment covering 51-73 (VKRKSLVKRKSPVKRSPLKKRSQ) has biased composition (basic residues).

This is an uncharacterized protein from Frog virus 3 (isolate Goorha) (FV-3).